We begin with the raw amino-acid sequence, 92 residues long: Small ribosomal subunit protein bS20 (92 aa).

Residues Met1–Asn21 are compositionally biased toward basic and acidic residues. 2 disordered regions span residues Met1–Lys26 and Ala73–Ser92. Residues Lys82–Ser92 show a composition bias toward polar residues.

Belongs to the bacterial ribosomal protein bS20 family.

Its function is as follows. Binds directly to 16S ribosomal RNA. The polypeptide is Small ribosomal subunit protein bS20 (Chlorobaculum tepidum (strain ATCC 49652 / DSM 12025 / NBRC 103806 / TLS) (Chlorobium tepidum)).